Consider the following 372-residue polypeptide: NAD(P)H-quinone oxidoreductase subunit 1 (372 aa).

The next 9 helical transmembrane spans lie at 27–47 (TIWL…GVLV), 65–85 (PEYI…KLVF), 97–117 (WLFT…YLIV), 128–148 (LGIG…GLLM), 176–196 (LALA…IDIV), 204–224 (ILGW…IAAL), 249–269 (YAGM…VLSS), 308–328 (GLGL…AILL), and 351–371 (VGLV…FAFG).

The protein belongs to the complex I subunit 1 family. NDH-1 is composed of at least 11 different subunits.

The protein localises to the cellular thylakoid membrane. The catalysed reaction is a plastoquinone + NADH + (n+1) H(+)(in) = a plastoquinol + NAD(+) + n H(+)(out). It catalyses the reaction a plastoquinone + NADPH + (n+1) H(+)(in) = a plastoquinol + NADP(+) + n H(+)(out). In terms of biological role, NDH-1 shuttles electrons from an unknown electron donor, via FMN and iron-sulfur (Fe-S) centers, to quinones in the respiratory and/or the photosynthetic chain. The immediate electron acceptor for the enzyme in this species is believed to be plastoquinone. Couples the redox reaction to proton translocation, and thus conserves the redox energy in a proton gradient. The protein is NAD(P)H-quinone oxidoreductase subunit 1 of Acaryochloris marina (strain MBIC 11017).